A 523-amino-acid polypeptide reads, in one-letter code: Effector protein hopAB1 (523 aa).

3 disordered regions span residues 1-94 (MPGI…EAQQ), 165-223 (VRQQ…QGLD), and 299-320 (RQTT…SGRR). The span at 18–31 (TDGEPVTEREHDSS) shows a compositional bias: basic and acidic residues. Low complexity predominate over residues 181-194 (SSSGSSQRSLIGRS).

It belongs to the HopAB family.

The protein localises to the secreted. In terms of biological role, effector protein that plays different roles depending on the species and plant cultivars that interact with the pathogen. Acts as a virulence determinant by enhancing the development of disease symptoms and bacterial growth. Acts as an avirulence factor by eliciting hypersensitive response (HR) and plant resistance. This is Effector protein hopAB1 (hopAB1) from Pseudomonas savastanoi pv. glycinea (Pseudomonas syringae pv. glycinea).